Consider the following 137-residue polypeptide: Nucleoside diphosphate kinase (137 aa).

ATP-binding residues include Lys-10, Phe-58, Arg-86, Thr-92, Arg-103, and Asn-113. His-116 functions as the Pros-phosphohistidine intermediate in the catalytic mechanism.

The protein belongs to the NDK family. Homotetramer. Requires Mg(2+) as cofactor.

The protein resides in the cytoplasm. It carries out the reaction a 2'-deoxyribonucleoside 5'-diphosphate + ATP = a 2'-deoxyribonucleoside 5'-triphosphate + ADP. The catalysed reaction is a ribonucleoside 5'-diphosphate + ATP = a ribonucleoside 5'-triphosphate + ADP. Major role in the synthesis of nucleoside triphosphates other than ATP. The ATP gamma phosphate is transferred to the NDP beta phosphate via a ping-pong mechanism, using a phosphorylated active-site intermediate. This is Nucleoside diphosphate kinase from Helicobacter pylori (strain G27).